A 424-amino-acid polypeptide reads, in one-letter code: Adenylosuccinate synthetase (424 aa).

Residues 12-18 (GDEGKGK) and 40-42 (GHT) contribute to the GTP site. Asp-13 functions as the Proton acceptor in the catalytic mechanism. Mg(2+) is bound by residues Asp-13 and Gly-40. IMP is bound by residues 13 to 16 (DEGK), 38 to 41 (NAGH), Thr-130, Arg-144, Asn-220, Thr-235, and Arg-299. His-41 serves as the catalytic Proton donor. Substrate is bound at residue 295–301 (VTTGRKR). Residues Arg-301, 327–329 (KLD), and 412–414 (GTG) contribute to the GTP site.

Belongs to the adenylosuccinate synthetase family. As to quaternary structure, homodimer. Requires Mg(2+) as cofactor.

Its subcellular location is the cytoplasm. It catalyses the reaction IMP + L-aspartate + GTP = N(6)-(1,2-dicarboxyethyl)-AMP + GDP + phosphate + 2 H(+). The protein operates within purine metabolism; AMP biosynthesis via de novo pathway; AMP from IMP: step 1/2. Plays an important role in the de novo pathway and in the salvage pathway of purine nucleotide biosynthesis. Catalyzes the first committed step in the biosynthesis of AMP from IMP. The protein is Adenylosuccinate synthetase (adB) of Emericella nidulans (strain FGSC A4 / ATCC 38163 / CBS 112.46 / NRRL 194 / M139) (Aspergillus nidulans).